The primary structure comprises 287 residues: Lipoyl synthase (287 aa).

[4Fe-4S] cluster-binding residues include Cys34, Cys39, Cys45, Cys60, Cys64, Cys67, and Ser273. The Radical SAM core domain maps to 46–262; it reads WNKRHATVMI…KYIAYSKGFL (217 aa).

The protein belongs to the radical SAM superfamily. Lipoyl synthase family. [4Fe-4S] cluster is required as a cofactor.

It localises to the cytoplasm. The enzyme catalyses [[Fe-S] cluster scaffold protein carrying a second [4Fe-4S](2+) cluster] + N(6)-octanoyl-L-lysyl-[protein] + 2 oxidized [2Fe-2S]-[ferredoxin] + 2 S-adenosyl-L-methionine + 4 H(+) = [[Fe-S] cluster scaffold protein] + N(6)-[(R)-dihydrolipoyl]-L-lysyl-[protein] + 4 Fe(3+) + 2 hydrogen sulfide + 2 5'-deoxyadenosine + 2 L-methionine + 2 reduced [2Fe-2S]-[ferredoxin]. It participates in protein modification; protein lipoylation via endogenous pathway; protein N(6)-(lipoyl)lysine from octanoyl-[acyl-carrier-protein]: step 2/2. Catalyzes the radical-mediated insertion of two sulfur atoms into the C-6 and C-8 positions of the octanoyl moiety bound to the lipoyl domains of lipoate-dependent enzymes, thereby converting the octanoylated domains into lipoylated derivatives. This is Lipoyl synthase from Wolbachia pipientis wMel.